A 422-amino-acid chain; its full sequence is UDP-N-acetylglucosamine 1-carboxyvinyltransferase (422 aa).

22–23 (KN) is a phosphoenolpyruvate binding site. Arg-92 is a binding site for UDP-N-acetyl-alpha-D-glucosamine. Cys-116 (proton donor) is an active-site residue. Cys-116 is modified (2-(S-cysteinyl)pyruvic acid O-phosphothioketal). 2 residues coordinate UDP-N-acetyl-alpha-D-glucosamine: Asp-306 and Ile-328.

It belongs to the EPSP synthase family. MurA subfamily.

It localises to the cytoplasm. It catalyses the reaction phosphoenolpyruvate + UDP-N-acetyl-alpha-D-glucosamine = UDP-N-acetyl-3-O-(1-carboxyvinyl)-alpha-D-glucosamine + phosphate. It functions in the pathway cell wall biogenesis; peptidoglycan biosynthesis. In terms of biological role, cell wall formation. Adds enolpyruvyl to UDP-N-acetylglucosamine. The chain is UDP-N-acetylglucosamine 1-carboxyvinyltransferase from Elusimicrobium minutum (strain Pei191).